The following is a 221-amino-acid chain: Small ribosomal subunit protein uS3c (221 aa).

The 71-residue stretch at 39–109 folds into the KH type-2 domain; sequence LRDYLKTRLA…RVIVHVVEIA (71 aa).

The protein belongs to the universal ribosomal protein uS3 family. Part of the 30S ribosomal subunit.

The protein resides in the plastid. Its subcellular location is the chloroplast. In Nephroselmis olivacea (Green alga), this protein is Small ribosomal subunit protein uS3c (rps3).